Here is a 181-residue protein sequence, read N- to C-terminus: Ribosome maturation factor RimM (181 aa).

The region spanning 98-172 (EDEFYFEDLI…RIVIPELSLW (75 aa)) is the PRC barrel domain.

Belongs to the RimM family. Binds ribosomal protein uS19.

The protein localises to the cytoplasm. Functionally, an accessory protein needed during the final step in the assembly of 30S ribosomal subunit, possibly for assembly of the head region. Essential for efficient processing of 16S rRNA. May be needed both before and after RbfA during the maturation of 16S rRNA. It has affinity for free ribosomal 30S subunits but not for 70S ribosomes. This Hyphomonas neptunium (strain ATCC 15444) protein is Ribosome maturation factor RimM.